Reading from the N-terminus, the 320-residue chain is Methyltransferase gedG (320 aa).

Positions 61–154 (DAGAGNGVYS…QLRPGGTFAC (94 aa)) are methyltransferase domain. Residues 231–252 (GLLPPERRGEVTEPDHEGPHDQ) form a disordered region. The span at 235-252 (PERRGEVTEPDHEGPHDQ) shows a compositional bias: basic and acidic residues.

Belongs to the methyltransferase superfamily.

The protein operates within secondary metabolite biosynthesis. Methyltransferase; part of the gene cluster that mediates the biosynthesis of geodin, an intermediate in the biosynthesis of other natural products. The pathway begins with the synthesis of atrochrysone thioester by the polyketide synthase (PKS) gedC. The atrochrysone carboxyl ACP thioesterase gedB then breaks the thioester bond and releases the atrochrysone carboxylic acid from gedC. The atrochrysone carboxylic acid is then converted to atrochrysone which is further transformed into emodinanthrone. The next step is performed by the emodinanthrone oxygenase gedH that catalyzes the oxidation of emodinanthrone to emodin. Emodin O-methyltransferase encoded probably by gedA then catalyzes methylation of the 8-hydroxy group of emodin to form questin. Ring cleavage of questin by questin oxidase gedK leads to desmethylsulochrin via several intermediates including questin epoxide. Another methylation step probably catalyzed by methyltransferase gedG leads to the formation of sulochrin which is further converted to dihydrogeodin by the sulochrin halogenase gedL. Finally, the dihydrogeodin oxidase gedJ catalyzes the stereospecific phenol oxidative coupling reaction converting dihydrogeodin to geodin. This Aspergillus terreus (strain NIH 2624 / FGSC A1156) protein is Methyltransferase gedG.